We begin with the raw amino-acid sequence, 399 residues long: Subtilisin-like protease 4 (399 aa).

The signal sequence occupies residues 1-19 (MVCLKTLSVFLAAFAVADA). Residues 20–118 (RAVFKTQSNK…VEQDQVVRIS (99 aa)) constitute a propeptide that is removed on maturation. One can recognise an Inhibitor I9 domain in the interval 38 to 117 (YIVVMKDGVS…YVEQDQVVRI (80 aa)). The Peptidase S8 domain maps to 128-399 (SWGLGRVSHR…NRLLYNGSGQ (272 aa)). Active-site charge relay system residues include Asp-160 and His-191. A glycan (N-linked (GlcNAc...) asparagine) is linked at Asn-252. Ser-346 acts as the Charge relay system in catalysis. Polar residues predominate over residues 380–392 (AISNPGSGTTNRL). Positions 380 to 399 (AISNPGSGTTNRLLYNGSGQ) are disordered. Asn-395 carries N-linked (GlcNAc...) asparagine glycosylation.

This sequence belongs to the peptidase S8 family.

It localises to the secreted. Its function is as follows. Secreted subtilisin-like serine protease with keratinolytic activity that contributes to pathogenicity. The sequence is that of Subtilisin-like protease 4 (SUB4) from Arthroderma gypseum (strain ATCC MYA-4604 / CBS 118893) (Microsporum gypseum).